Reading from the N-terminus, the 560-residue chain is Protein yellow (560 aa).

Positions 1 to 30 (MHVQDKGGIGALTALSLLLVAVTMVTPTQA) are cleaved as a signal peptide. N-linked (GlcNAc...) asparagine glycosylation is found at Asn153 and Asn224. The tract at residues 452 to 492 (QYRPVLPQKPQTSWGPSPPSRSYLPSLGASPGGPGQVVSSV) is disordered. Residues 471–480 (SRSYLPSLGA) show a composition bias toward low complexity.

This sequence belongs to the major royal jelly protein family.

Its subcellular location is the secreted. Functionally, controls the pigmentation pattern of the adult cuticle and larval mouth parts. This chain is Protein yellow (y), found in Drosophila pseudoobscura pseudoobscura (Fruit fly).